Consider the following 174-residue polypeptide: dCTP deaminase, dUMP-forming (174 aa).

Residues 93–98 (RSSIGR), Asp-111, 119–121 (TLE), Gln-138, and Tyr-151 each bind dCTP. The active-site Proton donor/acceptor is Glu-121.

It belongs to the dCTP deaminase family. As to quaternary structure, homotrimer.

The catalysed reaction is dCTP + 2 H2O = dUMP + NH4(+) + diphosphate. Its pathway is pyrimidine metabolism; dUMP biosynthesis; dUMP from dCTP: step 1/1. Its function is as follows. Bifunctional enzyme that catalyzes both the deamination of dCTP to dUTP and the hydrolysis of dUTP to dUMP without releasing the toxic dUTP intermediate. The polypeptide is dCTP deaminase, dUMP-forming (Leptospira biflexa serovar Patoc (strain Patoc 1 / Ames)).